Reading from the N-terminus, the 178-residue chain is Large ribosomal subunit protein uL6 (178 aa).

Belongs to the universal ribosomal protein uL6 family. As to quaternary structure, part of the 50S ribosomal subunit.

Functionally, this protein binds to the 23S rRNA, and is important in its secondary structure. It is located near the subunit interface in the base of the L7/L12 stalk, and near the tRNA binding site of the peptidyltransferase center. The sequence is that of Large ribosomal subunit protein uL6 from Campylobacter lari (strain RM2100 / D67 / ATCC BAA-1060).